The primary structure comprises 64 residues: Disintegrin schistatin (64 aa).

The region spanning 1-64 is the Disintegrin domain; it reads NSVHPCCDPV…PDCPRNRYNV (64 aa). Cystine bridges form between cysteine 6–cysteine 29, cysteine 20–cysteine 26, cysteine 25–cysteine 50, and cysteine 38–cysteine 57. A Cell attachment site motif is present at residues 42–44; that stretch reads RGD.

This sequence belongs to the disintegrin family. Dimeric disintegrin subfamily. As to quaternary structure, homodimer; disulfide-linked. Expressed by the venom gland.

The protein resides in the secreted. In terms of biological role, may bind to both alpha-IIb/beta-3 (ITGA2B/ITGB3) and alpha-V/beta-3 (ITGAV/ITGB3) integrins, and may inhibit platelet aggregation. This chain is Disintegrin schistatin, found in Echis carinatus (Saw-scaled viper).